Consider the following 229-residue polypeptide: Large ribosomal subunit protein uL1 (229 aa).

It belongs to the universal ribosomal protein uL1 family. Part of the 50S ribosomal subunit.

In terms of biological role, binds directly to 23S rRNA. The L1 stalk is quite mobile in the ribosome, and is involved in E site tRNA release. Protein L1 is also a translational repressor protein, it controls the translation of the L11 operon by binding to its mRNA. The protein is Large ribosomal subunit protein uL1 of Haemophilus ducreyi (strain 35000HP / ATCC 700724).